Reading from the N-terminus, the 1133-residue chain is Sterol regulatory element-binding protein 1 (1133 aa).

The segment at 1-60 (MDELPFGEAAVEQALDELGELDAALLTDIQDMLQLINNQDSDFPGLFDSPYAGGGAGDTE) is transcriptional activation (acidic). The Cytoplasmic segment spans residues 1–476 (MDELPFGEAA…HSHGMLDRSR (476 aa)). The 9aaTAD signature appears at 27–35 (TDIQDMLQL). Residues 46–78 (LFDSPYAGGGAGDTEPTSPGANSPESLSSPASL) are disordered. The segment covering 68–78 (SPESLSSPASL) has biased composition (low complexity). Ser97 and Ser116 each carry phosphoserine. Residues 131–219 (LQPPAAQPSP…PLPASTAPRT (89 aa)) form a disordered region. Polar residues predominate over residues 165 to 180 (SLPSGFSGTLPGNTQQ). 2 stretches are compositionally biased toward low complexity: residues 181-191 (PPSSLSLASAP) and 203-217 (QSSASQQPLPASTAP). Residues 227–486 (QRVPVVLQPH…LALCALVFLC (260 aa)) form an interaction with LMNA region. Residues 317–367 (EKRTAHNAIEKRYRSSINDKIVELKDLVVGTEAKLNKSAVLRKAIDYIRFL) form the bHLH domain. Residues Ser331 and Ser332 each carry the phosphoserine; by SIK1 modification. The leucine-zipper stretch occupies residues 367–388 (LQHSNQKLKQENLALRNAAHKS). Ser390 is subject to Phosphoserine; by AMPK. Position 396 is a phosphoserine; by SIK1 (Ser396). Residues 415 to 456 (VVDTLTPPPSDAGSPSQSSPLSLGSRGSSSGGSDSEPDSPVF) form a disordered region. Residues 425-454 (DAGSPSQSSPLSLGSRGSSSGGSDSEPDSP) show a composition bias toward low complexity. Ser449 carries the phosphoserine modification. A helical transmembrane segment spans residues 477–497 (LALCALVFLCLTCNPLASLFG). The Lumenal segment spans residues 498–535 (WGIPGPSSASGAHHSSGRSMLEAESRDGSNWTQWLLPP). The chain crosses the membrane as a helical span at residues 536 to 556 (LVWLANGLLVLACLALLFVYG). Over 557–1133 (EPVTRPHTSP…LGGGTTVTSS (577 aa)) the chain is Cytoplasmic. A Phosphoserine modification is found at Ser1046.

Belongs to the SREBP family. As to quaternary structure, efficient DNA binding of the soluble transcription factor fragment requires dimerization with another bHLH protein. Interacts with CEBPA, the interaction produces a transcriptional synergy. Interacts with LMNA. In terms of assembly, forms a tight complex with SCAP, the SCAP-SREBP complex, in the endoplasmic reticulum membrane and the Golgi apparatus. Interacts with PAQR3; the interaction anchors the SCAP-SREBP complex to the Golgi apparatus in low cholesterol conditions. In terms of processing, processed in the Golgi apparatus, releasing the protein from the membrane. At low cholesterol the SCAP-SREBP complex is recruited into COPII vesicles for export from the endoplasmic reticulum. In the Golgi, complex SREBPs are cleaved sequentially by site-1 (MBTPS1, S1P) and site-2 (MBTPS2, S2P) proteases. The first cleavage by site-1 protease occurs within the luminal loop, the second cleavage by site-2 protease occurs within the first transmembrane domain, releasing the transcription factor from the Golgi membrane. Post-translationally, phosphorylated by AMPK, leading to suppress protein processing and nuclear translocation, and repress target gene expression. Phosphorylation at Ser-396 by SIK1 represses activity possibly by inhibiting DNA-binding. SCAP-free SREBF1 is ubiquitinated by the BCR(ARMC5) complex, leading to its degradation. In terms of processing, ubiquitinated; the nuclear form has a rapid turnover and is rapidly ubiquitinated and degraded by the proteasome in the nucleus.

The protein resides in the endoplasmic reticulum membrane. It is found in the golgi apparatus membrane. The protein localises to the cytoplasmic vesicle. Its subcellular location is the COPII-coated vesicle membrane. It localises to the nucleus. Activation by cleavage is down-regulated upon activation of SIRT3-dependent PRKAA1/AMPK-alpha signaling cascade which leads to inhibition of ATP-consuming lipogenesis to restore cellular energy balance. In terms of biological role, precursor of the transcription factor form (Processed sterol regulatory element-binding protein 1), which is embedded in the endoplasmic reticulum membrane. Low sterol concentrations promote processing of this form, releasing the transcription factor form that translocates into the nucleus and activates transcription of genes involved in cholesterol biosynthesis and lipid homeostasis. Functionally, key transcription factor that regulates expression of genes involved in cholesterol biosynthesis and lipid homeostasis. Binds to the sterol regulatory element 1 (SRE-1) (5'-ATCACCCCAC-3'). Has dual sequence specificity binding to both an E-box motif (5'-ATCACGTGA-3') and to SRE-1 (5'-ATCACCCCAC-3'). Regulates the promoters of genes involved in cholesterol biosynthesis and the LDL receptor (LDLR) pathway of sterol regulation. The sequence is that of Sterol regulatory element-binding protein 1 from Cricetulus griseus (Chinese hamster).